The sequence spans 220 residues: Adenylate kinase (220 aa).

Position 10 to 15 (10 to 15 (GAGKGT)) interacts with ATP. An NMP region spans residues 30-59 (STGDMLRAAVKNCTPLGLKAKEIMDAGGLV). AMP-binding positions include threonine 31, arginine 36, 57–59 (GLV), 85–88 (GFPR), and glutamine 92. Residues 126-163 (GRRTCPSCGKGFHVLFAPPRKAGVCDFCGADLVQRGDD) form an LID region. Arginine 127 contributes to the ATP binding site. Residues cysteine 130, cysteine 133, cysteine 150, and cysteine 153 each coordinate Zn(2+). Positions 160 and 171 each coordinate AMP. Residue leucine 199 coordinates ATP.

It belongs to the adenylate kinase family. As to quaternary structure, monomer.

The protein localises to the cytoplasm. It carries out the reaction AMP + ATP = 2 ADP. It functions in the pathway purine metabolism; AMP biosynthesis via salvage pathway; AMP from ADP: step 1/1. In terms of biological role, catalyzes the reversible transfer of the terminal phosphate group between ATP and AMP. Plays an important role in cellular energy homeostasis and in adenine nucleotide metabolism. This is Adenylate kinase from Pelobacter propionicus (strain DSM 2379 / NBRC 103807 / OttBd1).